A 349-amino-acid polypeptide reads, in one-letter code: Isopentenyl-diphosphate delta-isomerase (349 aa).

Substrate is bound at residue 9 to 10 (RK). Residues 65–67 (AMT), serine 95, and asparagine 124 each bind FMN. 95–97 (STH) provides a ligand contact to substrate. Glutamine 154 is a binding site for substrate. A Mg(2+)-binding site is contributed by glutamate 155. Residues lysine 186, serine 211, threonine 216, 262 to 264 (GVR), and 283 to 284 (SR) contribute to the FMN site.

This sequence belongs to the IPP isomerase type 2 family. As to quaternary structure, homooctamer. Dimer of tetramers. The cofactor is FMN. NADPH is required as a cofactor. Requires Mg(2+) as cofactor.

It is found in the cytoplasm. The enzyme catalyses isopentenyl diphosphate = dimethylallyl diphosphate. Involved in the biosynthesis of isoprenoids. Catalyzes the 1,3-allylic rearrangement of the homoallylic substrate isopentenyl (IPP) to its allylic isomer, dimethylallyl diphosphate (DMAPP). This Staphylococcus haemolyticus (strain JCSC1435) protein is Isopentenyl-diphosphate delta-isomerase.